We begin with the raw amino-acid sequence, 229 residues long: Large ribosomal subunit protein uL1 (229 aa).

This sequence belongs to the universal ribosomal protein uL1 family. As to quaternary structure, part of the 50S ribosomal subunit.

In terms of biological role, binds directly to 23S rRNA. The L1 stalk is quite mobile in the ribosome, and is involved in E site tRNA release. Its function is as follows. Protein L1 is also a translational repressor protein, it controls the translation of the L11 operon by binding to its mRNA. The polypeptide is Large ribosomal subunit protein uL1 (Enterococcus faecalis (strain ATCC 700802 / V583)).